We begin with the raw amino-acid sequence, 207 residues long: LexA repressor (207 aa).

Positions 28–48 form a DNA-binding region, H-T-H motif; sequence VREIGEAVGLASSSTVHGHLA. Residues S129 and K167 each act as for autocatalytic cleavage activity in the active site.

It belongs to the peptidase S24 family. In terms of assembly, homodimer.

It carries out the reaction Hydrolysis of Ala-|-Gly bond in repressor LexA.. In terms of biological role, represses a number of genes involved in the response to DNA damage (SOS response), including recA and lexA. In the presence of single-stranded DNA, RecA interacts with LexA causing an autocatalytic cleavage which disrupts the DNA-binding part of LexA, leading to derepression of the SOS regulon and eventually DNA repair. This Bacillus licheniformis (strain ATCC 14580 / DSM 13 / JCM 2505 / CCUG 7422 / NBRC 12200 / NCIMB 9375 / NCTC 10341 / NRRL NRS-1264 / Gibson 46) protein is LexA repressor.